The chain runs to 128 residues: Nanos homolog 1 (128 aa).

Residues 7–23 (FNSWSDYLGLSSLISRG) are essential for its translational repressor activity. Residues 23–58 (GLQPREGGESPRPRWKASSPTPAEPLPSKAAEAHGH) are disordered. A Nanos-type zinc finger spans residues 60–114 (GCGFCRSNREAQSLYSSHRLRAPDGRVLCPVLRGYTCPLCGANGDWAHTMRYCPL). 8 residues coordinate Zn(2+): C61, C64, H77, C88, C96, C99, H107, and C112. 2 short sequence motifs (C2HC) span residues 61-88 (CGFC…RVLC) and 96-112 (CPLC…MRYC).

It belongs to the nanos family. In terms of assembly, interacts with ccnb1.

It localises to the cytoplasm. Its subcellular location is the perinuclear region. Acts as a translational repressor. Can mediate repression affecting different steps in the translation process: cap-driven, IRES-driven, polyadenylated RNAs or nonpolyadenylated RNAs. Essential for the development of primordial germ cells (PGCs) by ensuring their proper migration and survival. The protein is Nanos homolog 1 (nanos1) of Xenopus tropicalis (Western clawed frog).